Here is a 141-residue protein sequence, read N- to C-terminus: Large ribosomal subunit protein uL11 (141 aa).

The protein belongs to the universal ribosomal protein uL11 family. In terms of assembly, part of the ribosomal stalk of the 50S ribosomal subunit. Interacts with L10 and the large rRNA to form the base of the stalk. L10 forms an elongated spine to which L12 dimers bind in a sequential fashion forming a multimeric L10(L12)X complex. Post-translationally, one or more lysine residues are methylated.

Its function is as follows. Forms part of the ribosomal stalk which helps the ribosome interact with GTP-bound translation factors. This is Large ribosomal subunit protein uL11 from Roseobacter denitrificans (strain ATCC 33942 / OCh 114) (Erythrobacter sp. (strain OCh 114)).